The primary structure comprises 260 residues: Voltage-dependent calcium channel gamma-6 subunit (260 aa).

Transmembrane regions (helical) follow at residues 43–63 (LLVAIVGATLAVLAVGTEFWV), 143–163 (VIAVLGLTAMALGCLCVIMVL), 169–189 (SLLRLGAVCFGLSGLLLFVSL), and 221–241 (LGCGVGAGLILLLGGVCFLLL).

It belongs to the PMP-22/EMP/MP20 family. CACNG subfamily. Interacts with CACNA1C. Identified in a complex with the L-type calcium channel subunits CACNA1C, CACNA2D1 and either CACNB1 or CACNB2. Detected in brain and heart (at protein level).

The protein localises to the cell membrane. Functionally, regulates the activity of L-type calcium channels that contain CACNA1C as pore-forming subunit. In Mus musculus (Mouse), this protein is Voltage-dependent calcium channel gamma-6 subunit (Cacng6).